A 427-amino-acid chain; its full sequence is MIKVNLDHTNIDINKVVDLNKVKQIHQMIINKTGKGNDYLGWLNWPNDYNKTEYEQMKQVANKLRSEIEVLVVIGIGGSYLGCRAADEMIRGLYHQDKVELIYAGNTMSSTYIYQLVEYLKNKNFGICVISKSGTTTEPGISFRVFEKLLVDKVGLNKAKDLIVAITDKNKGALKQLADKKGYQTFVIPNDIGGRFSVLTPVGIFPLLVSGINTDNIFNGALKAKNELINDDLSNQAYKYAVIRNYLYNQGYKTDALISYELQLQMLTEWWKQLFGESEGKDNKGLLPSSMIFSTDLHSLGQWVQEGPRNVMFETIIKIEKPNYDLNVPIDEDNYDGLNYLTKNSFHQINQTALKGAIQAHSVTGNMPNIVLEFEKMDDEQFGYLVYFFELALTMSAYLLDVNPFNQPGVEVYKYNMFKLLNKPGIK.

Glutamate 277 functions as the Proton donor in the catalytic mechanism. Residues histidine 298 and lysine 414 contribute to the active site.

It belongs to the GPI family.

It is found in the cytoplasm. It catalyses the reaction alpha-D-glucose 6-phosphate = beta-D-fructose 6-phosphate. The protein operates within carbohydrate biosynthesis; gluconeogenesis. Its pathway is carbohydrate degradation; glycolysis; D-glyceraldehyde 3-phosphate and glycerone phosphate from D-glucose: step 2/4. In terms of biological role, catalyzes the reversible isomerization of glucose-6-phosphate to fructose-6-phosphate. In Mycoplasma mycoides subsp. mycoides SC (strain CCUG 32753 / NCTC 10114 / PG1), this protein is Glucose-6-phosphate isomerase.